Consider the following 131-residue polypeptide: Aspartate 1-decarboxylase (131 aa).

Serine 25 acts as the Schiff-base intermediate with substrate; via pyruvic acid in catalysis. The residue at position 25 (serine 25) is a Pyruvic acid (Ser). Threonine 57 lines the substrate pocket. Residue tyrosine 58 is the Proton donor of the active site. Residue 73 to 75 participates in substrate binding; it reads GAA. The disordered stretch occupies residues 112-131; that stretch reads NVPTTQKSENPGQGSLRNAI. Residues 113–131 show a composition bias toward polar residues; it reads VPTTQKSENPGQGSLRNAI.

It belongs to the PanD family. In terms of assembly, heterooctamer of four alpha and four beta subunits. The cofactor is pyruvate. Post-translationally, is synthesized initially as an inactive proenzyme, which is activated by self-cleavage at a specific serine bond to produce a beta-subunit with a hydroxyl group at its C-terminus and an alpha-subunit with a pyruvoyl group at its N-terminus.

The protein localises to the cytoplasm. It catalyses the reaction L-aspartate + H(+) = beta-alanine + CO2. Its pathway is cofactor biosynthesis; (R)-pantothenate biosynthesis; beta-alanine from L-aspartate: step 1/1. Catalyzes the pyruvoyl-dependent decarboxylation of aspartate to produce beta-alanine. This chain is Aspartate 1-decarboxylase, found in Syntrophotalea carbinolica (strain DSM 2380 / NBRC 103641 / GraBd1) (Pelobacter carbinolicus).